A 126-amino-acid chain; its full sequence is Probable DNA-directed RNA polymerase II subunit RPB11 (126 aa).

Belongs to the archaeal Rpo11/eukaryotic RPB11/RPC19 RNA polymerase subunit family. As to quaternary structure, component of the RNA polymerase II (Pol II) complex consisting of 12 subunits.

The protein localises to the nucleus. Functionally, DNA-dependent RNA polymerase catalyzes the transcription of DNA into RNA using the four ribonucleoside triphosphates as substrates. Component of RNA polymerase II which synthesizes mRNA precursors and many functional non-coding RNAs. Pol II is the central component of the basal RNA polymerase II transcription machinery. It is composed of mobile elements that move relative to each other. RPB11 is part of the core element with the central large cleft. The sequence is that of Probable DNA-directed RNA polymerase II subunit RPB11 from Plasmodium chabaudi chabaudi.